A 347-amino-acid chain; its full sequence is Ileal sodium/bile acid cotransporter (347 aa).

The Extracellular portion of the chain corresponds to 1-29 (MSNLTVGCLANATVCEGASCVAPESNFNA). Residues N3 and N11 are each glycosylated (N-linked (GlcNAc...) asparagine). Residues 30 to 50 (ILSVVLSTVLTILLALVMFSM) traverse the membrane as a helical segment. At 51–83 (GCNVEIKKFLGHIRRPWGIFIGFLCQFGIMPLT) the chain is on the cytoplasmic side. A helical membrane pass occupies residues 84–104 (GFVLAVAFGIMPIQAVVVLIM). At 105 to 127 (GCCPGGTASNILAYWVDGDMDLS) the chain is on the extracellular side. The chain crosses the membrane as a helical span at residues 128 to 148 (VSMTTCSTLLALGMMPLCLYV). At 149-158 (YTKMWVDSGT) the chain is on the cytoplasmic side. The helical transmembrane segment at 159-179 (IVIPYDNIGTSLVALVVPVSI) threads the bilayer. The Extracellular portion of the chain corresponds to 180-196 (GMFVNHKWPQKAKIILK). A helical transmembrane segment spans residues 197 to 217 (VGSIAGAVLIVLIAVVGGILY). Residues 218-225 (QSAWIIEP) are Cytoplasmic-facing. Residues 226–246 (KLWIIGTIFPMAGYSLGFFLA) traverse the membrane as a helical segment. Over 247 to 289 (RIAGQPWYRCRTVALETGMQNTQLCSTIVQLSFSPEDLTYVFT) the chain is Extracellular. A helical transmembrane segment spans residues 290–310 (FPLIYSIFQIAFAAIFLGIYV). The Cytoplasmic segment spans residues 311-347 (AYRKCHGKNDAEFPDIKDTKTEPESSFHQMNGGFQPE). Basic and acidic residues predominate over residues 323 to 335 (FPDIKDTKTEPES). A disordered region spans residues 323-347 (FPDIKDTKTEPESSFHQMNGGFQPE). S336 is modified (phosphoserine).

The protein belongs to the bile acid:sodium symporter (BASS) (TC 2.A.28) family. In terms of assembly, monomer and homodimer.

It is found in the membrane. It carries out the reaction taurocholate(out) + 2 Na(+)(out) = taurocholate(in) + 2 Na(+)(in). The catalysed reaction is cholate(out) + 2 Na(+)(out) = cholate(in) + 2 Na(+)(in). It catalyses the reaction taurochenodeoxycholate(out) + 2 Na(+)(out) = taurochenodeoxycholate(in) + 2 Na(+)(in). The enzyme catalyses tauroursodeoxycholate(out) + 2 Na(+)(out) = tauroursodeoxycholate(in) + 2 Na(+)(in). It carries out the reaction glycocholate(out) + 2 Na(+)(out) = glycocholate(in) + 2 Na(+)(in). The catalysed reaction is tauronorcholate(out) + 2 Na(+)(out) = tauronorcholate(in) + 2 Na(+)(in). It catalyses the reaction tauroallocholate(out) + 2 Na(+)(out) = tauroallocholate(in) + 2 Na(+)(in). The enzyme catalyses taurodeoxycholate(out) + 2 Na(+)(out) = taurodeoxycholate(in) + 2 Na(+)(in). It carries out the reaction tauro-beta-muricholate(out) + 2 Na(+)(out) = tauro-beta-muricholate(in) + 2 Na(+)(in). In terms of biological role, plays a critical role in the sodium-dependent reabsorption of bile acids from the lumen of the small intestine. Transports various bile acids, unconjugated or conjugated, such as cholate and taurocholate. Also responsible for bile acid transport in the renal proximal tubules, a salvage mechanism that helps conserve bile acids. Works collaboratively with the Na(+)-taurocholate cotransporting polypeptide (NTCP), the organic solute transporter (OST), and the bile salt export pump (BSEP), to ensure efficacious biological recycling of bile acids during enterohepatic circulation. This is Ileal sodium/bile acid cotransporter (SLC10A2) from Oryctolagus cuniculus (Rabbit).